The primary structure comprises 419 residues: Prolyl hydroxylase EGLN2 (419 aa).

Low complexity-rich tracts occupy residues 1–18 (MDSP…PQLP) and 64–73 (TTATATTTTA). Disordered stretches follow at residues 1 to 89 (MDSP…GELW) and 108 to 181 (AAQG…REEV). Residues 89 to 134 (WPLQSEGAAALVTKECQRLAAQGARPEAPKRKWAKDGGDAPSPSKR) carry the Bipartite nuclear localization signal motif. Positions 115–126 (EAPKRKWAKDGG) are enriched in basic and acidic residues. Serine 130 is subject to Phosphoserine. A compositionally biased stretch (low complexity) spans 154 to 174 (SGASNSSSSSSNTTSSSGEAS). Residues 237–247 (VSQRAIPPRSI) are beta(2)beta(3) 'finger-like' loop. In terms of domain architecture, Fe2OG dioxygenase spans 290–388 (GRTKAMVACY…RYAITVWYFD (99 aa)). The Fe cation site is built by histidine 309, aspartate 311, and histidine 370. Arginine 379 contacts 2-oxoglutarate.

In terms of assembly, interacts with E3 ligase SIAH2. Interacts with LIMD1, WTIP and AJUBA. It depends on Fe(2+) as a cofactor. L-ascorbate serves as cofactor. In terms of processing, ubiquitinated by SIAH1 and/or SIAH2 in response to the unfolded protein response (UPR), leading to its degradation. In terms of tissue distribution, highly expressed in testis, expression was also detected in the heart brain, liver kidney and lung. Expression was lowest in spleen and skeletal muscle. Constitutively expressed during differentiation of C2C12 skeletal myocytes.

It is found in the nucleus. The enzyme catalyses L-prolyl-[protein] + 2-oxoglutarate + O2 = trans-4-hydroxy-L-prolyl-[protein] + succinate + CO2. It carries out the reaction L-prolyl-[hypoxia-inducible factor alpha subunit] + 2-oxoglutarate + O2 = trans-4-hydroxy-L-prolyl-[hypoxia-inducible factor alpha subunit] + succinate + CO2. Functionally, prolyl hydroxylase that mediates hydroxylation of proline residues in target proteins, such as ATF4, IKBKB, CEP192 and HIF1A. Target proteins are preferentially recognized via a LXXLAP motif. Cellular oxygen sensor that catalyzes, under normoxic conditions, the post-translational formation of 4-hydroxyproline in hypoxia-inducible factor (HIF) alpha proteins. Hydroxylates a specific proline found in each of the oxygen-dependent degradation (ODD) domains (N-terminal, NODD, and C-terminal, CODD) of HIF1A. Also hydroxylates HIF2A. Has a preference for the CODD site for both HIF1A and HIF2A. Hydroxylated HIFs are then targeted for proteasomal degradation via the von Hippel-Lindau ubiquitination complex. Under hypoxic conditions, the hydroxylation reaction is attenuated allowing HIFs to escape degradation resulting in their translocation to the nucleus, heterodimerization with HIF1B, and increased expression of hypoxy-inducible genes. EGLN2 is involved in regulating hypoxia tolerance and apoptosis in cardiac and skeletal muscle. Also regulates susceptibility to normoxic oxidative neuronal death. Links oxygen sensing to cell cycle and primary cilia formation by hydroxylating the critical centrosome component CEP192 which promotes its ubiquitination and subsequent proteasomal degradation. Hydroxylates IKBKB, mediating NF-kappa-B activation in hypoxic conditions. Also mediates hydroxylation of ATF4, leading to decreased protein stability of ATF4. The chain is Prolyl hydroxylase EGLN2 from Mus musculus (Mouse).